The following is a 630-amino-acid chain: Probable potassium transport system protein Kup 1 (630 aa).

12 consecutive transmembrane segments (helical) span residues 15–35, 58–78, 104–124, 142–162, 173–193, 208–228, 252–272, 290–310, 342–362, 368–388, 399–419, and 424–444; these read LLAM…TSPL, LISL…VLFL, TAIL…DAMI, PALS…LFAV, FFGP…FMHI, AVAF…AVFL, WFTV…AFVL, ALLP…QAVI, IYLP…VFIF, LATA…VLAF, AWWA…FLGA, and IHDG…IMWT.

The protein belongs to the HAK/KUP transporter (TC 2.A.72) family.

It localises to the cell inner membrane. The catalysed reaction is K(+)(in) + H(+)(in) = K(+)(out) + H(+)(out). Functionally, transport of potassium into the cell. Likely operates as a K(+):H(+) symporter. The sequence is that of Probable potassium transport system protein Kup 1 from Sinorhizobium medicae (strain WSM419) (Ensifer medicae).